A 28-amino-acid polypeptide reads, in one-letter code: Flagellar filament 34 kDa core protein (28 aa).

The protein belongs to the bacterial flagellin family. As to quaternary structure, the flagellum consists of an outer layer composed of repeating units of FlaA around a core that contains several antigenically related polypeptides.

It localises to the periplasmic flagellum. It is found in the periplasm. Functionally, component of the core of the flagella. The protein is Flagellar filament 34 kDa core protein of Treponema phagedenis.